Reading from the N-terminus, the 427-residue chain is UPF0597 protein CD630_32320 (427 aa).

This sequence belongs to the UPF0597 family.

This chain is UPF0597 protein CD630_32320, found in Clostridioides difficile (strain 630) (Peptoclostridium difficile).